The sequence spans 380 residues: Erythronate-4-phosphate dehydrogenase (380 aa).

The substrate site is built by S45 and T66. NAD(+)-binding positions include 126–127 (QV), D146, T174, 205–207 (ASR), and D231. R207 is a catalytic residue. Residue E236 is part of the active site. The active-site Proton donor is H253. G256 lines the NAD(+) pocket. Y257 lines the substrate pocket.

It belongs to the D-isomer specific 2-hydroxyacid dehydrogenase family. PdxB subfamily. Homodimer.

Its subcellular location is the cytoplasm. It carries out the reaction 4-phospho-D-erythronate + NAD(+) = (R)-3-hydroxy-2-oxo-4-phosphooxybutanoate + NADH + H(+). It participates in cofactor biosynthesis; pyridoxine 5'-phosphate biosynthesis; pyridoxine 5'-phosphate from D-erythrose 4-phosphate: step 2/5. Functionally, catalyzes the oxidation of erythronate-4-phosphate to 3-hydroxy-2-oxo-4-phosphonooxybutanoate. In Azotobacter vinelandii (strain DJ / ATCC BAA-1303), this protein is Erythronate-4-phosphate dehydrogenase.